The sequence spans 584 residues: Asparagine synthetase [glutamine-hydrolyzing] 1 (584 aa).

The For GATase activity role is filled by cysteine 2. A Glutamine amidotransferase type-2 domain is found at 2-185 (CGILAVLGCS…PGHFYSSKLG (184 aa)). Residues 50-54 (RLAVI), 75-77 (NGE), and aspartate 98 contribute to the L-glutamine site. One can recognise an Asparagine synthetase domain in the interval 193-516 (PPWFNESVPS…PQNSARLTVP (324 aa)). Residues leucine 231, valine 267, and 341-342 (SG) each bind ATP.

The catalysed reaction is L-aspartate + L-glutamine + ATP + H2O = L-asparagine + L-glutamate + AMP + diphosphate + H(+). It functions in the pathway amino-acid biosynthesis; L-asparagine biosynthesis; L-asparagine from L-aspartate (L-Gln route): step 1/1. Essential for nitrogen assimilation, distribution and remobilization within the plant via the phloem. The protein is Asparagine synthetase [glutamine-hydrolyzing] 1 (ASN1) of Arabidopsis thaliana (Mouse-ear cress).